A 131-amino-acid chain; its full sequence is Phosphoribosyl-AMP cyclohydrolase (131 aa).

Position 76 (Asp-76) interacts with Mg(2+). Cys-77 lines the Zn(2+) pocket. Mg(2+)-binding residues include Asp-78 and Asp-80. The Zn(2+) site is built by Cys-94 and Cys-101.

This sequence belongs to the PRA-CH family. In terms of assembly, homodimer. Mg(2+) serves as cofactor. The cofactor is Zn(2+).

It is found in the cytoplasm. It catalyses the reaction 1-(5-phospho-beta-D-ribosyl)-5'-AMP + H2O = 1-(5-phospho-beta-D-ribosyl)-5-[(5-phospho-beta-D-ribosylamino)methylideneamino]imidazole-4-carboxamide. The protein operates within amino-acid biosynthesis; L-histidine biosynthesis; L-histidine from 5-phospho-alpha-D-ribose 1-diphosphate: step 3/9. In terms of biological role, catalyzes the hydrolysis of the adenine ring of phosphoribosyl-AMP. The chain is Phosphoribosyl-AMP cyclohydrolase from Stutzerimonas stutzeri (strain A1501) (Pseudomonas stutzeri).